A 364-amino-acid chain; its full sequence is Fructose-1,6-bisphosphatase class 1 2 (364 aa).

Glutamate 99, aspartate 121, leucine 123, and aspartate 124 together coordinate Mg(2+). Residues 124–127 and asparagine 220 contribute to the substrate site; that span reads DGSS. Glutamate 292 contacts Mg(2+).

The protein belongs to the FBPase class 1 family. Homotetramer. The cofactor is Mg(2+).

It localises to the cytoplasm. The enzyme catalyses beta-D-fructose 1,6-bisphosphate + H2O = beta-D-fructose 6-phosphate + phosphate. It participates in carbohydrate biosynthesis; gluconeogenesis. In Polaromonas naphthalenivorans (strain CJ2), this protein is Fructose-1,6-bisphosphatase class 1 2.